A 112-amino-acid chain; its full sequence is Nucleoid-associated protein CA_C0126 (112 aa).

Residues 93-102 show a composition bias toward basic and acidic residues; that stretch reads EEETSGEMKK. Residues 93–112 form a disordered region; that stretch reads EEETSGEMKKLTGGLNIPGL.

This sequence belongs to the YbaB/EbfC family. In terms of assembly, homodimer.

The protein resides in the cytoplasm. It is found in the nucleoid. Functionally, binds to DNA and alters its conformation. May be involved in regulation of gene expression, nucleoid organization and DNA protection. In Clostridium acetobutylicum (strain ATCC 824 / DSM 792 / JCM 1419 / IAM 19013 / LMG 5710 / NBRC 13948 / NRRL B-527 / VKM B-1787 / 2291 / W), this protein is Nucleoid-associated protein CA_C0126.